Here is a 301-residue protein sequence, read N- to C-terminus: Homoserine O-acetyltransferase (301 aa).

The Acyl-thioester intermediate role is filled by cysteine 142. Substrate-binding residues include lysine 163 and serine 192. The active-site Proton acceptor is the histidine 235. Glutamate 237 is an active-site residue. Arginine 249 is a substrate binding site.

Belongs to the MetA family.

It is found in the cytoplasm. It catalyses the reaction L-homoserine + acetyl-CoA = O-acetyl-L-homoserine + CoA. It functions in the pathway amino-acid biosynthesis; L-methionine biosynthesis via de novo pathway; O-acetyl-L-homoserine from L-homoserine: step 1/1. Transfers an acetyl group from acetyl-CoA to L-homoserine, forming acetyl-L-homoserine. This is Homoserine O-acetyltransferase from Bacillus cereus (strain ATCC 14579 / DSM 31 / CCUG 7414 / JCM 2152 / NBRC 15305 / NCIMB 9373 / NCTC 2599 / NRRL B-3711).